A 343-amino-acid chain; its full sequence is Phosphoribosylformylglycinamidine cyclo-ligase (343 aa).

It belongs to the AIR synthase family.

It is found in the cytoplasm. The enzyme catalyses 2-formamido-N(1)-(5-O-phospho-beta-D-ribosyl)acetamidine + ATP = 5-amino-1-(5-phospho-beta-D-ribosyl)imidazole + ADP + phosphate + H(+). The protein operates within purine metabolism; IMP biosynthesis via de novo pathway; 5-amino-1-(5-phospho-D-ribosyl)imidazole from N(2)-formyl-N(1)-(5-phospho-D-ribosyl)glycinamide: step 2/2. The sequence is that of Phosphoribosylformylglycinamidine cyclo-ligase from Staphylococcus epidermidis (strain ATCC 35984 / DSM 28319 / BCRC 17069 / CCUG 31568 / BM 3577 / RP62A).